The chain runs to 382 residues: Cell division protein DivIB (382 aa).

Residues Met1 to Ser103 lie on the Cytoplasmic side of the membrane. Composition is skewed to basic and acidic residues over residues Glu36–Ala49 and Val60–Ser70. The segment at Glu36–Glu92 is disordered. The helical transmembrane segment at Leu104–Tyr124 threads the bilayer. The region spanning Ser125–Phe196 is the POTRA domain. Topologically, residues Ser125–Gly382 are extracellular. The disordered stretch occupies residues Gln322–Gly382. A compositionally biased stretch (basic and acidic residues) spans Ala338–Gln352.

The protein belongs to the FtsQ/DivIB family. DivIB subfamily.

It is found in the cell membrane. Its function is as follows. Cell division protein that may be involved in stabilizing or promoting the assembly of the division complex. The protein is Cell division protein DivIB of Streptococcus pyogenes serotype M2 (strain MGAS10270).